We begin with the raw amino-acid sequence, 685 residues long: MEDKEVVNSENKVEVIKEEENIKKEDDVTKKVSENTEDNDISLANNVSLGKHLLIGSSLKKGISVSVRGRTMNLGMNAKQAGSAWKKKETENVEEEGEEKEKKIDDESFPDLLESTEKMKSELSKEKDKKKKQLKDGKKVEDNVNVFNSGFDRGGKTTDGNSTEFNDKKKYNMYDGNKKNDNAFNKKWYNNQQNDMNNNNQNNQNNMNNNNNNNNGHIFDTNESEEVTGYILPGFKGKHMVGFTCFLKRGTQNPVPPPPAPPLTNNQGENNIPTDNRNNENKKLMNTNIKMNQQVDNNNNNNNNNNNLGSAMNTPMNNMNKGGPRNNVNNSEHMREHSNHTVNRFAPMGQYANSKNNNMNNVHNVNNVNNVNNVNNVNNVNNMNNMNNMNNMNNNMNNMNNNMNNNMNNMNNMNSMNSMNNMNNMNSMNNMNNMNNMNNNNNNKFNENNILYKGTNYNRNVKNLGQNNNEGNTNMKHGHNNNRGQGNNNNNNNNNNFNRRNDKNDNRNFRRKDIDLEINWRNTANPTQEENNNNMNHNNNYNNNNNNNNNNNNNNNNNNNTNHGKNFRNFNNLNNMKNNNSSNNKMMGMNHMQQKGMNSSTGGHKYSFNKNDDQKNNNKMYKNNMGNANNNNNNNAVNTNFNNNNNNGNFHMNNNKSINSMDVKKTRMKDIRNLNDPPKVNNNEA.

4 disordered regions span residues 78–220 (AKQA…HIFD), 251–280 (TQNPVPPPPAPPLTNNQGENNIPTDNRNNE), 296–332 (DNNNNNNNNNNNLGSAMNTPMNNMNKGGPRNNVNNSE), and 459–657 (RNVK…NNKS). Positions 86-139 (KKKETENVEEEGEEKEKKIDDESFPDLLESTEKMKSELSKEKDKKKKQLKDGKK) form a coiled coil. Composition is skewed to basic and acidic residues over residues 115–127 (STEKMKSELSKEK) and 165–181 (FNDKKKYNMYDGNKKND). The segment covering 190 to 215 (NNQQNDMNNNNQNNQNNMNNNNNNNN) has biased composition (low complexity). The span at 263–276 (LTNNQGENNIPTDN) shows a compositional bias: polar residues. The segment covering 297 to 307 (NNNNNNNNNNN) has biased composition (low complexity). Residues 308-331 (LGSAMNTPMNNMNKGGPRNNVNNS) are compositionally biased toward polar residues. 2 stretches are compositionally biased toward low complexity: residues 460–474 (NVKNLGQNNNEGNTN) and 481–498 (NNRGQGNNNNNNNNNNFN). Basic and acidic residues predominate over residues 499–515 (RRNDKNDNRNFRRKDID). Residues 520-530 (WRNTANPTQEE) are compositionally biased toward polar residues. Over residues 531 to 590 (NNNNMNHNNNYNNNNNNNNNNNNNNNNNNNTNHGKNFRNFNNLNNMKNNNSSNNKMMGMN) the composition is skewed to low complexity. A compositionally biased stretch (polar residues) spans 591–602 (HMQQKGMNSSTG). Over residues 617-656 (NNKMYKNNMGNANNNNNNNAVNTNFNNNNNNGNFHMNNNK) the composition is skewed to low complexity.

This is an uncharacterized protein from Plasmodium falciparum (isolate 3D7).